We begin with the raw amino-acid sequence, 677 residues long: Penicillin-binding protein activator LpoA (677 aa).

A signal peptide spans 1–26; sequence MLPSKIVRHKAGRFVPVLLAGLILAA. Residue cysteine 27 is the site of N-palmitoyl cysteine attachment. Cysteine 27 carries the S-diacylglycerol cysteine lipid modification. A disordered region spans residues 309–359; that stretch reads QPADANAVVSPSANPAAAQQSGTAQQPATTQQQPQQQPAAEPASNAQVKVY. Residues 313–355 show a composition bias toward low complexity; sequence ANAVVSPSANPAAAQQSGTAQQPATTQQQPQQQPAAEPASNAQ.

Belongs to the LpoA family. Interacts with PBP1a.

It localises to the cell outer membrane. Regulator of peptidoglycan synthesis that is essential for the function of penicillin-binding protein 1A (PBP1a). The protein is Penicillin-binding protein activator LpoA of Pantoea ananatis (strain LMG 20103).